A 211-amino-acid chain; its full sequence is Large ribosomal subunit protein uL3 (211 aa).

Gln150 carries the post-translational modification N5-methylglutamine.

This sequence belongs to the universal ribosomal protein uL3 family. As to quaternary structure, part of the 50S ribosomal subunit. Forms a cluster with proteins L14 and L19. Methylated by PrmB.

Functionally, one of the primary rRNA binding proteins, it binds directly near the 3'-end of the 23S rRNA, where it nucleates assembly of the 50S subunit. This chain is Large ribosomal subunit protein uL3, found in Pseudomonas syringae pv. tomato (strain ATCC BAA-871 / DC3000).